The primary structure comprises 118 residues: Hisactophilin-2 (118 aa).

Residue Gly-2 is the site of N-myristoyl glycine attachment. The tract at residues Ala-8–His-109 is contains several HHXH repeats. A run of 2 repeats spans residues Phe-34–Arg-46 and Phe-74–Lys-86. The segment at Phe-34 to Lys-86 is 2 X 13 AA approximate repeats. The tract at residues Gly-99–Leu-118 is disordered.

Belongs to the hisactophilin family. As to quaternary structure, homodimer or heterodimer of hatA and hatB, linked by a disulfide bond. Post-translationally, phosphorylated.

The protein resides in the cytoplasm. The protein localises to the cell membrane. Functionally, may act as an intracellular pH sensor that links chemotactic signals to responses in the microfilament system of the cells by nucleating actin polymerization or stabilizing the filaments. The chain is Hisactophilin-2 (hatB) from Dictyostelium discoideum (Social amoeba).